Here is a 310-residue protein sequence, read N- to C-terminus: Ribosomal protein uL3 glutamine methyltransferase (310 aa).

It belongs to the protein N5-glutamine methyltransferase family. PrmB subfamily.

It catalyses the reaction L-glutaminyl-[ribosomal protein uL3] + S-adenosyl-L-methionine = N(5)-methyl-L-glutaminyl-[ribosomal protein uL3] + S-adenosyl-L-homocysteine + H(+). In terms of biological role, methylates large ribosomal subunit protein uL3 on a specific glutamine residue. The polypeptide is Ribosomal protein uL3 glutamine methyltransferase (Aliivibrio fischeri (strain ATCC 700601 / ES114) (Vibrio fischeri)).